A 251-amino-acid polypeptide reads, in one-letter code: Probable transcriptional regulatory protein BLA_1344 (251 aa).

The protein belongs to the TACO1 family.

The protein resides in the cytoplasm. The protein is Probable transcriptional regulatory protein BLA_1344 of Bifidobacterium animalis subsp. lactis (strain AD011).